We begin with the raw amino-acid sequence, 131 residues long: Ponticulin-like protein M (131 aa).

The N-terminal stretch at 1–19 (MKFLSTLILLLSVLALVRG) is a signal peptide. S106 is lipidated: GPI-like-anchor amidated serine. The propeptide at 107–131 (NSASSPLTTAVLFVVAFAAAIALLL) is removed in mature form.

The protein belongs to the ponticulin family. Post-translationally, the GPI-like-anchor contains a phosphoceramide group, rather than a phosphatidyl group.

It is found in the cell membrane. In terms of biological role, binds F-actin and nucleates actin assembly. The polypeptide is Ponticulin-like protein M (ponM) (Dictyostelium discoideum (Social amoeba)).